Reading from the N-terminus, the 454-residue chain is Tryptophanase (454 aa).

Lys256 is modified (N6-(pyridoxal phosphate)lysine).

This sequence belongs to the beta-eliminating lyase family. As to quaternary structure, homotetramer. Pyridoxal 5'-phosphate is required as a cofactor.

The catalysed reaction is L-tryptophan + H2O = indole + pyruvate + NH4(+). The protein operates within amino-acid degradation; L-tryptophan degradation via pyruvate pathway; indole and pyruvate from L-tryptophan: step 1/1. This chain is Tryptophanase (tnaA), found in Rhodobacter capsulatus (Rhodopseudomonas capsulata).